Consider the following 101-residue polypeptide: NADH-quinone oxidoreductase subunit K (101 aa).

3 helical membrane passes run 4-24 (LAHY…GIFL), 30-50 (IIIL…FVAF), and 61-81 (IFVF…LAIL).

Belongs to the complex I subunit 4L family. As to quaternary structure, NDH-1 is composed of 14 different subunits. Subunits NuoA, H, J, K, L, M, N constitute the membrane sector of the complex.

The protein localises to the cell inner membrane. The catalysed reaction is a quinone + NADH + 5 H(+)(in) = a quinol + NAD(+) + 4 H(+)(out). In terms of biological role, NDH-1 shuttles electrons from NADH, via FMN and iron-sulfur (Fe-S) centers, to quinones in the respiratory chain. The immediate electron acceptor for the enzyme in this species is believed to be ubiquinone. Couples the redox reaction to proton translocation (for every two electrons transferred, four hydrogen ions are translocated across the cytoplasmic membrane), and thus conserves the redox energy in a proton gradient. This chain is NADH-quinone oxidoreductase subunit K, found in Burkholderia cenocepacia (strain HI2424).